The chain runs to 235 residues: Putative N-acetylmannosamine-6-phosphate 2-epimerase (235 aa).

Belongs to the NanE family.

It catalyses the reaction an N-acyl-D-glucosamine 6-phosphate = an N-acyl-D-mannosamine 6-phosphate. It functions in the pathway amino-sugar metabolism; N-acetylneuraminate degradation; D-fructose 6-phosphate from N-acetylneuraminate: step 3/5. Its function is as follows. Converts N-acetylmannosamine-6-phosphate (ManNAc-6-P) to N-acetylglucosamine-6-phosphate (GlcNAc-6-P). In Photobacterium profundum (strain SS9), this protein is Putative N-acetylmannosamine-6-phosphate 2-epimerase.